The sequence spans 835 residues: Protein translocase subunit SecA (835 aa).

ATP contacts are provided by residues Gln85, 103-107 (GEGKT), and Asp492. Residues Cys819, Cys821, Cys830, and Cys831 each contribute to the Zn(2+) site.

Belongs to the SecA family. In terms of assembly, monomer and homodimer. Part of the essential Sec protein translocation apparatus which comprises SecA, SecYEG and auxiliary proteins SecDF. Other proteins may also be involved. It depends on Zn(2+) as a cofactor.

It is found in the cell membrane. Its subcellular location is the cytoplasm. It carries out the reaction ATP + H2O + cellular proteinSide 1 = ADP + phosphate + cellular proteinSide 2.. Functionally, part of the Sec protein translocase complex. Interacts with the SecYEG preprotein conducting channel. Has a central role in coupling the hydrolysis of ATP to the transfer of proteins into and across the cell membrane, serving as an ATP-driven molecular motor driving the stepwise translocation of polypeptide chains across the membrane. The protein is Protein translocase subunit SecA of Clostridium botulinum (strain ATCC 19397 / Type A).